The primary structure comprises 316 residues: Palmitoyltransferase ZDHHC3-A (316 aa).

At 1-45 (MRSPVPRFRDVERQASGLQPPQCLPSCHERQSSMWFIKDACGIVC) the chain is on the cytoplasmic side. A helical membrane pass occupies residues 46–66 (AIITWFLVFFAEFVVLFVMLI). Residues 67-70 (PSKN) lie on the Lumenal side of the membrane. A helical membrane pass occupies residues 71–91 (LTYSLVNGTLFNSLAFLALAS). The Cytoplasmic segment spans residues 92 to 169 (HFRAMCTDPG…NCVGENNQKY (78 aa)). Positions 124-175 (VYKCPKCCSIKPDRAHHCSVCKRCIRKMDHHCPWVNNCVGENNQKYFVLFTM) constitute a DHHC domain. C144 carries S-palmitoyl cysteine lipidation. Catalysis depends on C155, which acts as the S-palmitoyl cysteine intermediate. A helical transmembrane segment spans residues 170 to 190 (FVLFTMYICLISLHSLVMVVF). Residues 191–212 (HFLNCFEDDWTKCSTFSPPATV) are Lumenal-facing. The helical transmembrane segment at 213 to 233 (ILLILLCFEGLLFLIFTSVMF) threads the bilayer. The Cytoplasmic portion of the chain corresponds to 234–316 (GTQVHSICTD…DVIEIPLEPH (83 aa)).

Belongs to the DHHC palmitoyltransferase family. In terms of assembly, monomer. Homooligomers. The monomeric form has a higher catalytic activity. Forms heterooligomers with zdhhc7. Autopalmitoylated.

The protein resides in the golgi apparatus membrane. The catalysed reaction is L-cysteinyl-[protein] + hexadecanoyl-CoA = S-hexadecanoyl-L-cysteinyl-[protein] + CoA. It carries out the reaction L-cysteinyl-[protein] + tetradecanoyl-CoA = S-tetradecanoyl-L-cysteinyl-[protein] + CoA. The enzyme catalyses L-cysteinyl-[protein] + octadecanoyl-CoA = S-octadecanoyl-L-cysteinyl-[protein] + CoA. In terms of biological role, golgi-localized palmitoyltransferase that catalyzes the addition of palmitate onto various protein substrates and regulates their association with membranes. Has no stringent fatty acid selectivity and in addition to palmitate can also transfer onto target proteins myristate from tetradecanoyl-CoA and stearate from octadecanoyl-CoA. This is Palmitoyltransferase ZDHHC3-A (zdhhc3a) from Danio rerio (Zebrafish).